The chain runs to 596 residues: MNTAIQAALDHAVQTLQQEGVLPSDWNNSSNLTRTKDRSHGDFASNIAMIGSKAAGMKPRDLAEKILAALPEVADISKAEIAGPGFINFFLNADQRFAILDQIQAQKESFGRSQSNVAKKIQVEFVSANPTSSLHVGHGRGAAYGMTVANLLEATGAKVDREYYVNDAGRQMDILATSTYLRYLELLGQNLVFPKNAYQGDYVKEIAQGIIDKDGDAYVREVANVYKDVPEDVQYAEELDSEGNKVVLSGDKEKHIDGLIANSQQLLGEGYRVFHQAALHAILDDIKDDLADFGVTFNQWFSEASLSAKIDEALETLDQRGFLYEKDGNIWFKSTEFGDEKDRVVKRRNGQTTYFASDIAYHLNKLQRGYTDLVDIWGSDHHGYISRVKAAIDAMGYDSKKLTVLLVQFVSLWRGGEMVQMSSRSGQFVTLRDLRKEVGNDAARFYYVMRKSEQHIDFDLDLAVSQSKDNAVYYIQYAHARICRMLEKAASTGLQFEVSAARSHAARLSLDAETEILAKLAAYPDVVLRAANAYEPHQVGNYLKELAALFHGWYNEHKVLSDDAELTQARLLLSINVQQVLRNGLELLGVSAPEAM.

A 'HIGH' region motif is present at residues 128-138; sequence ANPTSSLHVGH.

Belongs to the class-I aminoacyl-tRNA synthetase family. Monomer.

It is found in the cytoplasm. It carries out the reaction tRNA(Arg) + L-arginine + ATP = L-arginyl-tRNA(Arg) + AMP + diphosphate. The sequence is that of Arginine--tRNA ligase from Acinetobacter baumannii (strain SDF).